The primary structure comprises 78 residues: Protein SlyX homolog (78 aa).

Belongs to the SlyX family.

The chain is Protein SlyX homolog from Photobacterium profundum (strain SS9).